We begin with the raw amino-acid sequence, 89 residues long: GTP cyclohydrolase 1 feedback regulatory protein (89 aa).

This sequence belongs to the GFRP family. In terms of assembly, homopentamer. Forms a complex with GCH1 where a GCH1 homodecamer is sandwiched by two GFRP homopentamers.

It is found in the nucleus. Its subcellular location is the nucleus membrane. The protein resides in the cytoplasm. It localises to the cytosol. Its function is as follows. Mediates tetrahydrobiopterin inhibition of GTP cyclohydrolase 1. The chain is GTP cyclohydrolase 1 feedback regulatory protein (gchfr) from Danio rerio (Zebrafish).